A 583-amino-acid polypeptide reads, in one-letter code: Isocitrate dehydrogenase kinase/phosphatase (583 aa).

ATP-binding positions include 315–321 (APGIRGM) and Lys336. Asp371 is a catalytic residue.

Belongs to the AceK family.

It localises to the cytoplasm. It catalyses the reaction L-seryl-[isocitrate dehydrogenase] + ATP = O-phospho-L-seryl-[isocitrate dehydrogenase] + ADP + H(+). Its function is as follows. Bifunctional enzyme which can phosphorylate or dephosphorylate isocitrate dehydrogenase (IDH) on a specific serine residue. This is a regulatory mechanism which enables bacteria to bypass the Krebs cycle via the glyoxylate shunt in response to the source of carbon. When bacteria are grown on glucose, IDH is fully active and unphosphorylated, but when grown on acetate or ethanol, the activity of IDH declines drastically concomitant with its phosphorylation. This chain is Isocitrate dehydrogenase kinase/phosphatase, found in Salmonella dublin (strain CT_02021853).